Here is a 200-residue protein sequence, read N- to C-terminus: Large ribosomal subunit protein bL25 (200 aa).

Belongs to the bacterial ribosomal protein bL25 family. CTC subfamily. As to quaternary structure, part of the 50S ribosomal subunit; part of the 5S rRNA/L5/L18/L25 subcomplex. Contacts the 5S rRNA. Binds to the 5S rRNA independently of L5 and L18.

Functionally, this is one of the proteins that binds to the 5S RNA in the ribosome where it forms part of the central protuberance. The polypeptide is Large ribosomal subunit protein bL25 (Caldicellulosiruptor bescii (strain ATCC BAA-1888 / DSM 6725 / KCTC 15123 / Z-1320) (Anaerocellum thermophilum)).